A 286-amino-acid chain; its full sequence is Homoserine kinase (286 aa).

78–88 (PLARGLGSSSS) is a binding site for ATP.

It belongs to the GHMP kinase family. Homoserine kinase subfamily.

The protein resides in the cytoplasm. It catalyses the reaction L-homoserine + ATP = O-phospho-L-homoserine + ADP + H(+). The protein operates within amino-acid biosynthesis; L-threonine biosynthesis; L-threonine from L-aspartate: step 4/5. Its function is as follows. Catalyzes the ATP-dependent phosphorylation of L-homoserine to L-homoserine phosphate. This Streptococcus thermophilus (strain CNRZ 1066) protein is Homoserine kinase.